Consider the following 542-residue polypeptide: MGWWGWAAAAAAAAAWVAVKVLEVLWWRPRRVEEHFARQGITGPRYRFLVGCVREMVALMVAASAKPMPPPYRSHNVLPRVLAFYHHWKKIYGSTFLIWFGPTPRLAIADPELIREVLLARADRFDRYESHPMVRQLEGEGLVSLRGDKWAHHRRVLTPAFHMDNLRLLLPCVGMTVLDMADKWRAMAEADKSGEVEIDVSDWFQVVTEDAITRTAFGRSYEDGKVVFKLQAQLMAFASEAFRKVFIPGYRFLPTKKNTSSWKLDKEIRKNLVTLIGRRQEAGDDEKLDGCAKDLLGLMINAAASSNGGKRSALPVSPITVNDIVEECKTFFFAGKQTTSNLLTWAIVVLAMHPEWQERARQEVLDVCGADGVPSREQLAKLKTLGMILNETLRLYPPAVATVRRAKADVELGGYLRIPRDTELLIPIMAVHHDARLWGPDAAQFNPARFAGGVARAARHPAAFIPFGLGARMCIGQNLAILEAKLTVAVILHRFEFRLSARYVHAPTVLMLLHPQYGAPIVFRPRSSSQPTCEKMNPLTSS.

The helical transmembrane segment at 2–22 (GWWGWAAAAAAAAAWVAVKVL) threads the bilayer. Cysteine 474 serves as a coordination point for heme.

Belongs to the cytochrome P450 family. Heme serves as cofactor. In terms of tissue distribution, highly expressed in leaf sheaths. Expressed in roots, shoot apex, leaf blades, internodes and panicles.

Its subcellular location is the membrane. In terms of biological role, cytochrome P450 involved in brassinosteroids (BRs) inactivation and regulation of BRs homeostasis. Is a multifunctional and multisubstrate enzyme that controls the endogenous bioactive BR content both by direct inactivation of castasterone (CS) and by decreasing the levels of BR precursors. Catalyzes the oxidation of carbon 22 hydroxylated BR intermediates to produce C26 oxidized metabolites. The sequence is that of Cytochrome P450 734A6 (CYP734A6) from Oryza sativa subsp. japonica (Rice).